The chain runs to 241 residues: Keratin-associated protein 5-5 (241 aa).

Tandem repeats lie at residues 35–38, 41–44, 47–50, 105–108, 115–118, 133–136, 143–146, 161–164, 171–174, 181–184, 191–194, 201–204, 211–214, 221–224, and 231–234. The 15 X 4 AA repeats of C-C-X-P stretch occupies residues 35–234; the sequence is CCKPVCCCKP…CCCQSSCCAP (200 aa).

The protein belongs to the KRTAP type 5 family. Interacts with hair keratins.

In the hair cortex, hair keratin intermediate filaments are embedded in an interfilamentous matrix, consisting of hair keratin-associated protein (KRTAP), which are essential for the formation of a rigid and resistant hair shaft through their extensive disulfide bond cross-linking with abundant cysteine residues of hair keratins. The matrix proteins include the high-sulfur and high-glycine-tyrosine keratins. The chain is Keratin-associated protein 5-5 from Mus musculus (Mouse).